Consider the following 266-residue polypeptide: Glucosamine-6-phosphate deaminase (266 aa).

The Proton acceptor; for enolization step role is filled by D72. D141 functions as the For ring-opening step in the catalytic mechanism. H143 (proton acceptor; for ring-opening step) is an active-site residue. Catalysis depends on E148, which acts as the For ring-opening step.

Belongs to the glucosamine/galactosamine-6-phosphate isomerase family. NagB subfamily. Homohexamer; trimer of disulfide-linked dimers.

The enzyme catalyses alpha-D-glucosamine 6-phosphate + H2O = beta-D-fructose 6-phosphate + NH4(+). The protein operates within amino-sugar metabolism; N-acetylneuraminate degradation; D-fructose 6-phosphate from N-acetylneuraminate: step 5/5. Allosterically activated by N-acetylglucosamine 6-phosphate (GlcNAc6P). Catalyzes the reversible isomerization-deamination of glucosamine 6-phosphate (GlcN6P) to form fructose 6-phosphate (Fru6P) and ammonium ion. This chain is Glucosamine-6-phosphate deaminase, found in Shigella flexneri serotype 5b (strain 8401).